A 938-amino-acid polypeptide reads, in one-letter code: MSDYKNTLNLPETGFPMRGDLAKREPGMLQRWYEQDLYGMIRTAKKGKKSFILHDGPPYANGSIHIGHSVNKILKDIIIKSKGMSGFDSPYIPGWDCHGLPIELKVEQLYGKPGEKLTAAEFRIKCREYAAEQVEGQKKDFIRLGVLGDWDRPYLTMDFKTEANIIRALGKIISNGHLLKGAKPVHWCTDCRSSLAEAEVEYYDKTSPSIDVAFHAVDAAAVATKFGVTRFNGPVSLVIWTTTPWTLPANRAISLHPEFAYQLVQVEGQCLILAAELVESVMKRAGITHWEVLGSCKGADLELMRFEHPFMGFDVPAIMGEHVTLDAGTGAVHTAGGHGPDDFVISQKYGLEIANPVGPNGCYLTGTHPLLDGKFVFKANDLIVDLLREKDALLHVEKLVHSYPCCWRHKTPIIFRATPQWFISMDQKGLRKQSLEEIKGVQWIPEWGQARIETMVANRPDWCISRQRTWGVPMSLFVHKDTEQLHPRSVELMEEVAKRVEQDGIQAWWDLDAADILGADAADYVKVPDTLDVWFDSGSTHSSVVDVRPEFNGHGADMYLEGSDQHRGWFMSSLMISTAMKGKAPYKEVLTHGFTVDGQGRKMSKSIGNTISPQDVMNKLGGDILRLWVASTDYTGEIAVSDEILKRSADSYRRIRNTARFLLANLNGFEPSTDCVAPEEMVVLDRWAVGRALAAQQDIEKAYANYDFHEVVQRLMQFCSVEMGSFYLDIIKDRQYTAKSDSVARRSCQTALFHIAEALVRWMAPIMSFTADEIWAFLPGKRAQYVFTEEWYDGLFGLAEGEGMNDSFWAELLKVRGEVNKVLEQARADKRLGGSLEAAVTLYADSELAERLNSLQDELRFVLLTSGARVAPLADAPADAQAAELVKGLKIAFSTAEGEKCPRCWHYTTDIGLVAEHADLCGRCVVNVAGDGEKRKFA.

The 'HIGH' region signature appears at 58-68 (PYANGSIHIGH). An L-isoleucyl-5'-AMP-binding site is contributed by Glu561. The short motif at 602–606 (KMSKS) is the 'KMSKS' region element. Lys605 lines the ATP pocket. The Zn(2+) site is built by Cys901, Cys904, Cys921, and Cys924.

Belongs to the class-I aminoacyl-tRNA synthetase family. IleS type 1 subfamily. Monomer. It depends on Zn(2+) as a cofactor.

The protein localises to the cytoplasm. The enzyme catalyses tRNA(Ile) + L-isoleucine + ATP = L-isoleucyl-tRNA(Ile) + AMP + diphosphate. Catalyzes the attachment of isoleucine to tRNA(Ile). As IleRS can inadvertently accommodate and process structurally similar amino acids such as valine, to avoid such errors it has two additional distinct tRNA(Ile)-dependent editing activities. One activity is designated as 'pretransfer' editing and involves the hydrolysis of activated Val-AMP. The other activity is designated 'posttransfer' editing and involves deacylation of mischarged Val-tRNA(Ile). The polypeptide is Isoleucine--tRNA ligase (Serratia proteamaculans (strain 568)).